Reading from the N-terminus, the 33-residue chain is Dermaseptin-4 (33 aa).

Leu33 carries the post-translational modification Leucine amide.

In terms of tissue distribution, expressed by the skin glands.

Its subcellular location is the secreted. In terms of biological role, has antiparasitic activity against trypomastigote form of T.cruzi (IC(50)=0.25 uM) in vitro but not against L.infantum. Probably acts by permeabilizing cell membranes. In vitro, shows no cytotoxicity against macrophages. Has antibacterial activity. The polypeptide is Dermaseptin-4 (Pithecopus nordestinus (Northeastern Brazilian leaf frog)).